The sequence spans 264 residues: MKQYLDLMRHVLDHGDRKSDRTGTGTLSIFGWQMRFNLDDGFPLLTTKKLHTRSIIHELLWFLRGDTNIRYLNENGVSIWDDWADENGDLGPVYGKQWRRWETANGATIDQIAQLIDGLKHNPDSRRHLVSAWNPGEVAGMALPPCHALFQFYVAGDRLSCQLYQRSADIFLGVPFNIASYALLTLMVAQVCGLRAGDFVWTGGDCHLYLNHLDQARLQLSRQPRALPRMIVNPGVTDIFGFRFEDFRLEGYDPHPHIKAEVAV.

Arg-21 is a binding site for dUMP. (6R)-5,10-methylene-5,6,7,8-tetrahydrofolate is bound at residue His-51. DUMP is bound at residue 126 to 127 (RR). Residue Cys-146 is the Nucleophile of the active site. DUMP contacts are provided by residues 166 to 169 (RSAD), Asn-177, and 207 to 209 (HLY). Asp-169 serves as a coordination point for (6R)-5,10-methylene-5,6,7,8-tetrahydrofolate. Residue Ala-263 participates in (6R)-5,10-methylene-5,6,7,8-tetrahydrofolate binding.

The protein belongs to the thymidylate synthase family. Bacterial-type ThyA subfamily. Homodimer.

It is found in the cytoplasm. It carries out the reaction dUMP + (6R)-5,10-methylene-5,6,7,8-tetrahydrofolate = 7,8-dihydrofolate + dTMP. The protein operates within pyrimidine metabolism; dTTP biosynthesis. Functionally, catalyzes the reductive methylation of 2'-deoxyuridine-5'-monophosphate (dUMP) to 2'-deoxythymidine-5'-monophosphate (dTMP) while utilizing 5,10-methylenetetrahydrofolate (mTHF) as the methyl donor and reductant in the reaction, yielding dihydrofolate (DHF) as a by-product. This enzymatic reaction provides an intracellular de novo source of dTMP, an essential precursor for DNA biosynthesis. The polypeptide is Thymidylate synthase (Aromatoleum aromaticum (strain DSM 19018 / LMG 30748 / EbN1) (Azoarcus sp. (strain EbN1))).